Here is a 237-residue protein sequence, read N- to C-terminus: MEHKAPLVEFLGLTFNLSDMLMITITCLIVFIIAVAATRSLQLRPTGMQNFMEWVFDFVRGIINSTMDWQTGGRFLTLGVTLIMYVFVANMLGLPFWLDVTVNFGGNRRPTDATVTLTLRDGRRPHHYYGVKMKGASDYLRDYTRPVAWLFPLKIIEEFANTLTLGLRLFGNIYAGEILLGLLASLGTHYGVLGCGSIPMMVIMVWQAFSIFVGTIQAFIFTMLTSFYMAHKISHDH.

Helical transmembrane passes span Leu17–Ala37, Leu78–Leu98, Ile178–Ile198, and Met201–Phe221.

It belongs to the ATPase A chain family. F-type ATPases have 2 components, CF(1) - the catalytic core - and CF(0) - the membrane proton channel. CF(1) has five subunits: alpha(3), beta(3), gamma(1), delta(1), epsilon(1). CF(0) has three main subunits: a(1), b(2) and c(9-12). The alpha and beta chains form an alternating ring which encloses part of the gamma chain. CF(1) is attached to CF(0) by a central stalk formed by the gamma and epsilon chains, while a peripheral stalk is formed by the delta and b chains.

The protein resides in the cell membrane. Functionally, key component of the proton channel; it plays a direct role in the translocation of protons across the membrane. This chain is ATP synthase subunit a, found in Bacillus caldotenax.